A 76-amino-acid polypeptide reads, in one-letter code: UPF0154 protein Sca_0984 (76 aa).

A helical membrane pass occupies residues Trp-4 to Leu-24.

This sequence belongs to the UPF0154 family.

Its subcellular location is the cell membrane. This chain is UPF0154 protein Sca_0984, found in Staphylococcus carnosus (strain TM300).